The sequence spans 116 residues: Staphylococcal complement inhibitor (116 aa).

An N-terminal signal peptide occupies residues 1–31 (MKIRKSILAGTLAIVLASPLVTNLDKNEAQA). Positions 62-79 (LATGSLNTYYKRTIKISG) are essential for activity.

It belongs to the SCIN family.

The protein resides in the secreted. In terms of biological role, involved in countering the first line of host defense mechanisms. Efficiently inhibits opsonization, phagocytosis and killing of S.aureus by human neutrophils. Acts by binding and stabilizing human C3 convertases (C4b2a and C3bBb), leading to their inactivation. The convertases are no longer able to cleave complement C3, therefore preventing further C3b deposition on the bacterial surface and phagocytosis of the bacterium. Also prevents C5a-induced neutrophil responses. This is Staphylococcal complement inhibitor (scn) from Staphylococcus aureus (strain N315).